The sequence spans 338 residues: MSTLRLLISDSYDPWFNLAVEECIFRQMPATQRVLFLWRNADTVVIGRAQNPWKECNTRRMEEDNVRLARRSSGGGAVFHDLGNTCFTFMAGKPEYDKTISTSIVLNALNALGVSAEASGRNDLVVKTAEGDRKVSGSAYRETKDRGFHHGTLLLNADLSRLANYLNPDKKKLAAKGITSVRSRVTNLTELLPGITHEQVCEAITEAFFAHYGERVEAEIISPDKTPDLPNFAETFARQSSWEWNFGQAPAFSHLLDERFTWGGVELHFDVEKGHITRAQVFTDSLNPAPLEALAGRLQGCLYRADMLQQECEALLVDFPEQEKELRELSTWIAGAVR.

One can recognise a BPL/LPL catalytic domain in the interval 29–216 (PATQRVLFLW…AFFAHYGERV (188 aa)). ATP is bound by residues arginine 71, 76-79 (GAVF), and lysine 134. Lysine 134 is a (R)-lipoate binding site.

Belongs to the LplA family. Monomer.

It localises to the cytoplasm. The enzyme catalyses L-lysyl-[lipoyl-carrier protein] + (R)-lipoate + ATP = N(6)-[(R)-lipoyl]-L-lysyl-[lipoyl-carrier protein] + AMP + diphosphate + H(+). The protein operates within protein modification; protein lipoylation via exogenous pathway; protein N(6)-(lipoyl)lysine from lipoate: step 1/2. Its pathway is protein modification; protein lipoylation via exogenous pathway; protein N(6)-(lipoyl)lysine from lipoate: step 2/2. Its function is as follows. Catalyzes both the ATP-dependent activation of exogenously supplied lipoate to lipoyl-AMP and the transfer of the activated lipoyl onto the lipoyl domains of lipoate-dependent enzymes. This is Lipoate-protein ligase A from Escherichia coli (strain SMS-3-5 / SECEC).